A 313-amino-acid chain; its full sequence is Formimidoylglutamase (313 aa).

Mn(2+) is bound by residues His-130, Asp-155, His-157, Asp-159, Asp-241, and Asp-243.

Belongs to the arginase family. It depends on Mn(2+) as a cofactor.

The enzyme catalyses N-formimidoyl-L-glutamate + H2O = formamide + L-glutamate. It participates in amino-acid degradation; L-histidine degradation into L-glutamate; L-glutamate from N-formimidoyl-L-glutamate (hydrolase route): step 1/1. Catalyzes the conversion of N-formimidoyl-L-glutamate to L-glutamate and formamide. The protein is Formimidoylglutamase of Salmonella schwarzengrund (strain CVM19633).